A 409-amino-acid polypeptide reads, in one-letter code: Lactadherin (409 aa).

EGF-like domains follow at residues 2–41 (SGDFCDSSLCLNGGTCLLDQDPQKPFHCLCPEGFTGLICN) and 44–88 (EKGP…IHCE). 3 disulfide bridges follow: Cys6–Cys17, Cys11–Cys29, and Cys31–Cys40. Residue Asn41 is glycosylated (N-linked (GlcNAc...) asparagine). Disulfide bonds link Cys48/Cys59, Cys53/Cys76, Cys78/Cys87, Cys91/Cys247, Cys234/Cys238, and Cys252/Cys409. The Cell attachment site signature appears at 67 to 69 (RGD). F5/8 type C domains follow at residues 91 to 247 (CNAP…LLGC) and 252 to 409 (CAEP…LLGC). N-linked (GlcNAc...) asparagine glycosylation is present at Asn372.

Mammary epithelial cell surfaces and spermatozoan. Also present in testis, epididymis, uterus, adrenal gland, tonsil, muscle, heart, lymphatic gland, thymus and kidney but not spleen, liver, lung or brain.

It is found in the membrane. It localises to the secreted. The protein resides in the cytoplasmic vesicle. Its subcellular location is the secretory vesicle. The protein localises to the acrosome membrane. Contributes to phagocytic removal of apoptotic cells in many tissues. Plays an important role in the maintenance of intestinal epithelial homeostasis and the promotion of mucosal healing. Promotes VEGF-dependent neovascularization. Specific ligand for the alpha-v/beta-3 and alpha-v/beta-5 receptors. Also binds to phosphatidylserine-enriched cell surfaces in a receptor-independent manner. Zona pellucida-binding protein which may play a role in gamete interaction. This is Lactadherin (MFGE8) from Sus scrofa (Pig).